A 113-amino-acid polypeptide reads, in one-letter code: UPF0060 membrane protein Arth_4423 (113 aa).

4 consecutive transmembrane segments (helical) span residues Val7–Ala27, Ala33–Leu53, Ile62–Asp82, and Val91–Thr111.

It belongs to the UPF0060 family.

The protein resides in the cell membrane. The polypeptide is UPF0060 membrane protein Arth_4423 (Arthrobacter sp. (strain FB24)).